Reading from the N-terminus, the 457-residue chain is 5' exonuclease Apollo (457 aa).

The TBM motif lies at 425 to 437; that stretch reads ELPKQYLLTPLNA.

This sequence belongs to the DNA repair metallo-beta-lactamase (DRMBL) family. In terms of assembly, interacts with TERF2; the interaction is direct.

It localises to the chromosome. Its subcellular location is the telomere. The protein resides in the nucleus. The catalysed reaction is a beta-lactam + H2O = a substituted beta-amino acid. Its function is as follows. 5'-3' exonuclease that plays a central role in telomere maintenance and protection during S-phase. Participates in the protection of telomeres against non-homologous end-joining (NHEJ)-mediated repair, thereby ensuring that telomeres do not fuse. Plays a key role in telomeric loop (T loop) formation by being recruited by TERF2 at the leading end telomeres and by processing leading-end telomeres immediately after their replication via its exonuclease activity: generates 3' single-stranded overhang at the leading end telomeres avoiding blunt leading-end telomeres that are vulnerable to end-joining reactions and expose the telomere end in a manner that activates the DNA repair pathways. May be required for DNA interstrand cross-link repair. Possesses beta-lactamase activity, catalyzing the hydrolysis of penicillin G and nitrocefin. Exhibits no activity towards other beta-lactam antibiotic classes including cephalosporins (cefotaxime) and carbapenems (imipenem). The protein is 5' exonuclease Apollo (DCLRE1B) of Gallus gallus (Chicken).